The primary structure comprises 733 residues: Nuclear hormone receptor family member nhr-66 (733 aa).

2 stretches are compositionally biased toward low complexity: residues 113-130 and 165-185; these read PAIP…SQAS and QQNR…QQQN. The segment at 113–190 is disordered; sequence PAIPSSSSCS…AQQQNSMARK (78 aa). The nuclear receptor DNA-binding region spans 266 to 343; that stretch reads VPACAICGTD…SGMDKNSVQH (78 aa). 2 consecutive NR C4-type zinc fingers follow at residues 269-289 and 305-326; these read CAIC…CAAC and CNKG…CRAC. Residues 361–396 are disordered; it reads PDAEFEPSAKVSTVSEPSTSSGPSGGFNQNVSSPAG. Positions 371 to 382 are enriched in low complexity; the sequence is VSTVSEPSTSSG. The 244-residue stretch at 444–687 folds into the NR LBD domain; the sequence is CLGDWFRKPS…ACFNQMLDVE (244 aa). The interval 676 to 687 is AF-2; it reads ADACFNQMLDVE. Residues 691 to 733 form a disordered region; that stretch reads VSPDGQKDSEAEQGPSPVSVPEAARGSYQDDDMPPVLEKNCDL.

It belongs to the nuclear hormone receptor family. In terms of assembly, interacts with nuclear hormone receptor nhr-49; the interaction is direct. In terms of tissue distribution, widely expressed, including in hypodermis, gut, muscle, and neuronal cells of the ventral nerve cord, head, and tail ganglia. Expressed in the head ganglion in several sensory and interneurons, including AVA.

The protein localises to the nucleus. Transcription factor. Binds to regulatory elements and regulates transcription of target genes, including the potassium channel accessory subunit mps-2. Negatively regulates transcription of mps-2, thereby modulating age-dependent memory decline. In concert with nuclear hormone receptor nhr-49, involved in regulating target genes with roles in sphingolipid breakdown and lipid remodeling. Plays a role in modulating mitochondrial morphology and function. The polypeptide is Nuclear hormone receptor family member nhr-66 (Caenorhabditis elegans).